A 296-amino-acid polypeptide reads, in one-letter code: NAD kinase (296 aa).

Asp73 functions as the Proton acceptor in the catalytic mechanism. NAD(+) is bound by residues Asp73–Gly74, Lys78, Asn151–Glu152, Arg178, Asp180, and Thr191–Ser196.

It belongs to the NAD kinase family. The cofactor is a divalent metal cation.

The protein resides in the cytoplasm. The enzyme catalyses NAD(+) + ATP = ADP + NADP(+) + H(+). Involved in the regulation of the intracellular balance of NAD and NADP, and is a key enzyme in the biosynthesis of NADP. Catalyzes specifically the phosphorylation on 2'-hydroxyl of the adenosine moiety of NAD to yield NADP. The sequence is that of NAD kinase from Francisella tularensis subsp. tularensis (strain WY96-3418).